An 88-amino-acid chain; its full sequence is Small ribosomal subunit protein uS15 (88 aa).

It belongs to the universal ribosomal protein uS15 family. In terms of assembly, part of the 30S ribosomal subunit. Forms a bridge to the 50S subunit in the 70S ribosome, contacting the 23S rRNA.

One of the primary rRNA binding proteins, it binds directly to 16S rRNA where it helps nucleate assembly of the platform of the 30S subunit by binding and bridging several RNA helices of the 16S rRNA. Its function is as follows. Forms an intersubunit bridge (bridge B4) with the 23S rRNA of the 50S subunit in the ribosome. This chain is Small ribosomal subunit protein uS15, found in Flavobacterium psychrophilum (strain ATCC 49511 / DSM 21280 / CIP 103535 / JIP02/86).